The following is a 325-amino-acid chain: Beta-ketoacyl-[acyl-carrier-protein] synthase III (325 aa).

Residues Cys-112 and His-250 contribute to the active site. Residues 251–255 are ACP-binding; sequence QANIR. The active site involves Asn-280.

It belongs to the thiolase-like superfamily. FabH family. Homodimer.

It is found in the cytoplasm. It carries out the reaction malonyl-[ACP] + acetyl-CoA + H(+) = 3-oxobutanoyl-[ACP] + CO2 + CoA. It participates in lipid metabolism; fatty acid biosynthesis. Functionally, catalyzes the condensation reaction of fatty acid synthesis by the addition to an acyl acceptor of two carbons from malonyl-ACP. Catalyzes the first condensation reaction which initiates fatty acid synthesis and may therefore play a role in governing the total rate of fatty acid production. Possesses both acetoacetyl-ACP synthase and acetyl transacylase activities. Its substrate specificity determines the biosynthesis of branched-chain and/or straight-chain of fatty acids. The sequence is that of Beta-ketoacyl-[acyl-carrier-protein] synthase III from Clostridium acetobutylicum (strain ATCC 824 / DSM 792 / JCM 1419 / IAM 19013 / LMG 5710 / NBRC 13948 / NRRL B-527 / VKM B-1787 / 2291 / W).